We begin with the raw amino-acid sequence, 37 residues long: Mastoparan-VT (37 aa).

A propeptide spanning residues 1 to 22 is cleaved from the precursor; sequence EALADPIADPVAGPNPEADPEA. 4 AXPX repeats span residues 4–7, 8–11, 12–15, and 18–21; these read ADPI, ADPV, AGPN, and ADPE. Leucine amide is present on L36.

Belongs to the MCD family. Mastoparan subfamily. Expressed by the venom gland.

It localises to the secreted. It is found in the target cell membrane. Its function is as follows. Antimicrobial peptide with potent activity against both Gram-positive (S.aureus MIC=50 ug/ml, and B.subtilis MIC=25 ug/ml) and Gram-negative bacteria (P.aeruginosa MIC=25 ug/ml, E.coli MIC=3-50 ug/ml, K.pneumoniae MIC=25 ug/ml). Exhibits little hemolytic activity on human erythrocytes. In Vespa tropica (Greater banded hornet), this protein is Mastoparan-VT.